The chain runs to 385 residues: uncharacterized protein (385 aa).

The protein belongs to the phage portal family. HK97 subfamily.

This is an uncharacterized protein from Rickettsia bellii (strain RML369-C).